A 1135-amino-acid chain; its full sequence is MKWVKSGVGILGILLTICHAVTSQGHILDITDSLKITFKTLSNFGPRAQSIQNVTIENVGIKDIPDSGWRCYFCHDQLLFPGTFNLARNQYFLRPILDNYVVLSDGFLLEFIKGCMYRITPIPRNAPIKTRDKREFTLLAEQFSVSKYDSFPKWYCETISGGNTEVGIIRNTENLKYVEDFDSSYNWFRIPHDFRSVPLQPQDRFSANHKASSVDECKYKVIPTPVKASVSKVQRNFGTTVYYGTTDTSIRGREKLFKVAEQLALKHNLGLVEITPGLTVNNGISLVVTGNYVERNIPSPDEAYSLTVTADLISIEAPALPGLINGIETIHSLSAWDMALPYGGIKDFPRFPFRGIFLDIASNFPGYNYIKKFLTVMAQYKLNKLVLPMYNNEGFRLQLNDSPRYEFQALHMIGGKRCHDLKEEKCLFSQLGSGPDSSGGYLTKAQMTDLIKTADLLNIEIIMSMNIGESARGAIVPLKQSPHSRLLYDPDDTDFVDRFYPQKDTSMNPCREETTYFYDHMLKQLKDIYNAASVPLKTIMIGSKVNFDQVLNSKYCYASNLNSTQRLMARGNLERNINGFKLNFTKRLVKTAHDNGIKEVMAIDDVFTTEFDAEGNTPNTVYDTKNSDNSTRFNATVTAVHSRYDTVRDERLWKRGDRFAELGYKVILSPPILDFNYAVEPDPDRPGDYDSVIRNISFSKLFRFVPDSRCCNIPNAIQHDCALESDCTTAGAKDSYIGTLGKLDTRKLRSLKDWNELLFPRLLIFAERSWHKSSWEDSFGPHRASVNNITRQLITNYTVPNWNDINNEESKVLGCISRKEKLRLMHEDGLKPYVEPPGARLLGGNTMRIAASTTEDSFWVQASVNGNPWTDNVKILDVNPTDSVRLRTVHPAKAELRSKEVKLNLTSLPTPRERFRKIAQDALSRRIGIDIQRARMPPMPVNPAYRPPVPLPSFDPADDRAPDLAAIAAAHPPPLPPGMPSHMMPNMPPPFPPRPPFGPPMLPPGQMRALGQQAGQALRGQGTALGPQTGQQPMPAQPRGPLTGQAAGTGVAGQTGQQPSTAGQGTQQGLPGQQRGGVLPGQWPFFPGMPAAQFPPMFNPQMQRALQMRGQGQIPQRTQGAAAGAGQSRIPQQAG.

Residues 1 to 23 (MKWVKSGVGILGILLTICHAVTS) form the signal peptide. Disordered regions lie at residues 970–1082 (AHPP…LPGQ) and 1107–1135 (QMRG…QQAG). Residues 986-1003 (NMPPPFPPRPPFGPPMLP) are compositionally biased toward pro residues. 2 stretches are compositionally biased toward low complexity: residues 1004-1026 (PGQM…TALG) and 1043-1073 (TGQA…LPGQ).

The protein belongs to the glycosyl hydrolase 20 family. As to expression, prismatic layer of shell (at protein level). Expressed primarily in the mantle with highest level in the mantle edge and lower level in the mantle pallium.

The protein resides in the secreted. It catalyses the reaction Hydrolysis of terminal non-reducing N-acetyl-D-hexosamine residues in N-acetyl-beta-D-hexosaminides.. It functions in the pathway glycan degradation; chitin degradation. The protein is Putative beta-hexosaminidase of Margaritifera margaritifera (Freshwater pearl mussel).